The primary structure comprises 209 residues: Large ribosomal subunit protein uL3 (209 aa).

Positions Asn127–Met166 are disordered.

This sequence belongs to the universal ribosomal protein uL3 family. As to quaternary structure, part of the 50S ribosomal subunit. Forms a cluster with proteins L14 and L19.

In terms of biological role, one of the primary rRNA binding proteins, it binds directly near the 3'-end of the 23S rRNA, where it nucleates assembly of the 50S subunit. The chain is Large ribosomal subunit protein uL3 from Chlorobium phaeovibrioides (strain DSM 265 / 1930) (Prosthecochloris vibrioformis (strain DSM 265)).